Consider the following 243-residue polypeptide: uncharacterized protein (243 aa).

Residues C120 and C157 each contribute to the [4Fe-4S] cluster site.

As to quaternary structure, homodimer. The cofactor is [4Fe-4S] cluster.

This is an uncharacterized protein from Methanocaldococcus jannaschii (strain ATCC 43067 / DSM 2661 / JAL-1 / JCM 10045 / NBRC 100440) (Methanococcus jannaschii).